The chain runs to 122 residues: Mth938 domain-containing protein (122 aa).

The interval 6 to 122 is MTH138-like domain; the sequence is IASLSWGQMK…RVGGVFHSTC (117 aa).

Belongs to the AAMDC family.

It localises to the cytoplasm. Functionally, may play a role in preadipocyte differentiation and adipogenesis. This is Mth938 domain-containing protein (AAMDC) from Homo sapiens (Human).